Here is a 160-residue protein sequence, read N- to C-terminus: Nucleotide-binding protein Patl_4311 (160 aa).

It belongs to the YajQ family.

Nucleotide-binding protein. The sequence is that of Nucleotide-binding protein Patl_4311 from Pseudoalteromonas atlantica (strain T6c / ATCC BAA-1087).